Consider the following 57-residue polypeptide: DNA-directed RNA polymerase subunit Rpo6 (57 aa).

The protein belongs to the archaeal Rpo6/eukaryotic RPB6 RNA polymerase subunit family. Part of the RNA polymerase complex.

It is found in the cytoplasm. It catalyses the reaction RNA(n) + a ribonucleoside 5'-triphosphate = RNA(n+1) + diphosphate. Its function is as follows. DNA-dependent RNA polymerase (RNAP) catalyzes the transcription of DNA into RNA using the four ribonucleoside triphosphates as substrates. In Pyrococcus abyssi (strain GE5 / Orsay), this protein is DNA-directed RNA polymerase subunit Rpo6.